The sequence spans 596 residues: Protein FlbA (596 aa).

TPR repeat units lie at residues 91–124 (GLAWHILAIAREKTGDFASSLRAYEAALALLPDH), 159–192 (VEGANNLACALRELNRESEAIEVLKAALGANPEA), 193–226 (AVLWNTLGTVLCNIGDAAGSIVFFDESLRLAPDF), and 228–260 (KAYHNRAFARLDLGEIEAALADCEAAMRSPGSP).

This chain is Protein FlbA (flbA), found in Caulobacter vibrioides (strain ATCC 19089 / CIP 103742 / CB 15) (Caulobacter crescentus).